Here is a 301-residue protein sequence, read N- to C-terminus: F-actin-capping protein subunit beta (301 aa).

At Ser-31 the chain carries Phosphoserine. N6-acetyllysine is present on Lys-264.

This sequence belongs to the F-actin-capping protein beta subunit family. Component of the F-actin capping complex, composed of a heterodimer of an alpha and a beta subunit. Subunit of dynactin, a multiprotein complex part of a tripartite complex with dynein and a adapter, such as BICDL1, BICD2 or HOOK3. The dynactin complex is built around ACTR1A/ACTB filament and consists of an actin-related filament composed of a shoulder domain, a pointed end and a barbed end. Its length is defined by its flexible shoulder domain. The soulder is composed of 2 DCTN1 subunits, 4 DCTN2 and 2 DCTN3. The 4 DCNT2 (via N-terminus) bind the ACTR1A filament and act as molecular rulers to determine the length. The pointed end is important for binding dynein-dynactin cargo adapters. Consists of 4 subunits: ACTR10, DCNT4, DCTN5 and DCTN6. The barbed end is composed of a CAPZA1:CAPZB heterodimers, which binds ACTR1A/ACTB filament and dynactin and stabilizes dynactin. Interacts with ARHGAP17. Interaction with RCSD1/CAPZIP. Component of the WASH complex, composed of F-actin-capping protein subunit alpha (CAPZA1, CAPZA2 or CAPZA3), F-actin-capping protein subunit beta (CAPZB), WASH (WASHC1, WASH2P, WASH3P, WASH4P, WASH5P or WASH6P), WASHC2 (WASHC2A or WASHC2C), WASHC3, WASHC4 and WASHC5. Interacts with ACTG1. Directly interacts with CRACD; this interaction decreases binding to actin. As to expression, the isoform beta-3 is predominantly expressed in the testis. It is only detected in total sperm, sperm heads and the calyx fraction, but not in sperm tails or any supernatant fraction. Weaker expression also found in brain.

It localises to the cytoplasm. Its subcellular location is the cytoskeleton. The protein resides in the perinuclear theca. The protein localises to the calyx. In terms of biological role, F-actin-capping proteins bind in a Ca(2+)-independent manner to the fast growing ends of actin filaments (barbed end) thereby blocking the exchange of subunits at these ends. Unlike other capping proteins (such as gelsolin and severin), these proteins do not sever actin filaments. Plays a role in the regulation of cell morphology and cytoskeletal organization. Forms, with CAPZB, the barbed end of the fast growing ends of actin filaments in the dynactin complex and stabilizes dynactin structure. The dynactin multiprotein complex activates the molecular motor dynein for ultra-processive transport along microtubules. This is F-actin-capping protein subunit beta (CAPZB) from Bos taurus (Bovine).